We begin with the raw amino-acid sequence, 31 residues long: Cuticle protein 54 (31 aa).

Tandem repeats lie at residues 7 to 10 and 13 to 17.

Component of the cuticle of migratory locust which contains more than 100 different structural proteins. The protein is Cuticle protein 54 of Locusta migratoria (Migratory locust).